A 934-amino-acid polypeptide reads, in one-letter code: ATP-dependent RNA helicase dbp10 (934 aa).

Residues 1-57 (MPHRAASPAMSENEFDITGALFQNDSDSDNEQPSAKSKRQPPKKVPSQALDFLGDVN) form a disordered region. Residues 21–35 (LFQNDSDSDNEQPSA) show a composition bias toward polar residues. Residues 90-118 (GGFQAMGLSANLLKAIARKGFSVPTPIQR) carry the Q motif motif. In terms of domain architecture, Helicase ATP-binding spans 121–293 (IPVIMDDQDV…RAGLQEPTLV (173 aa)). An ATP-binding site is contributed by 134 to 141 (ARTGSGKT). Residues 241–244 (DEAD) carry the DEAD box motif. The interval 334–358 (GPTEVSQQRKEEDASAKNWKNKKRK) is disordered. Residues 361–515 (EMEKAVNMRE…QVNFAEDVVT (155 aa)) form the Helicase C-terminal domain. Residues 639-654 (LESKKKRAQANEKSEF) show a composition bias toward basic and acidic residues. Disordered stretches follow at residues 639 to 688 (LESK…PTGV) and 854 to 934 (AISG…SRKK). The span at 669 to 684 (GENENEGAFSDEDDDV) shows a compositional bias: acidic residues. Basic and acidic residues-rich tracts occupy residues 865-893 (EQAP…ERAM) and 903-915 (GKSE…DIRI). The segment covering 916 to 934 (ARKLKQKRREKNARPSRKK) has biased composition (basic residues).

Belongs to the DEAD box helicase family. DDX54/DBP10 subfamily.

It localises to the nucleus. Its subcellular location is the nucleolus. It catalyses the reaction ATP + H2O = ADP + phosphate + H(+). In terms of biological role, ATP-binding RNA helicase involved in the biogenesis of 60S ribosomal subunits and is required for the normal formation of 25S and 5.8S rRNAs. The chain is ATP-dependent RNA helicase dbp10 (dbp10) from Neosartorya fischeri (strain ATCC 1020 / DSM 3700 / CBS 544.65 / FGSC A1164 / JCM 1740 / NRRL 181 / WB 181) (Aspergillus fischerianus).